A 682-amino-acid chain; its full sequence is Nisin leader peptide-processing serine protease NisP (682 aa).

The first 22 residues, 1–22 (MKKILGFLFIVCSLGLSATVHG), serve as a signal peptide directing secretion. A propeptide spanning residues 23 to 195 (ETTNSQQLLS…RKAKEVVSLR (173 aa)) is cleaved from the precursor. A Peptidase S8 domain is found at 231 to 566 (QWDMKYVTNN…VDLLNGKNKA (336 aa)). Residues Asp259, His306, and Ser512 each act as charge relay system in the active site. The short motif at 652–656 (LPVTG) is the LPXTG sorting signal element. Position 655 is a pentaglycyl murein peptidoglycan amidated threonine (Thr655). The propeptide at 656 to 682 (GDGEDFLPALGIVCISILGILKRKTKN) is removed by sortase.

It belongs to the peptidase S8 family.

Its subcellular location is the secreted. It localises to the cell wall. The protein operates within antibiotic biosynthesis; nisin biosynthesis. Its function is as follows. Cleaves the lantibiotic nisin precursor peptide. In Lactococcus lactis subsp. lactis (Streptococcus lactis), this protein is Nisin leader peptide-processing serine protease NisP (nisP).